Reading from the N-terminus, the 404-residue chain is Multidrug resistance protein MdtG (404 aa).

Transmembrane regions (helical) follow at residues 19-39 (LGCF…PLYV), 56-76 (LVFS…GGLA), 90-110 (LGMA…QFLI), 113-133 (ALLG…ATQV), 144-164 (TLST…GLLA), 171-191 (PVFF…FFFI), 222-242 (LFVT…ILTL), 254-274 (IAFI…LSAP), 288-308 (ILIV…FVQT), 317-337 (FLLG…LVYN), and 376-396 (AVFC…WNSL).

The protein belongs to the major facilitator superfamily. DHA1 family. MdtG (TC 2.A.1.2.20) subfamily.

It is found in the cell inner membrane. The sequence is that of Multidrug resistance protein MdtG from Salmonella agona (strain SL483).